A 632-amino-acid chain; its full sequence is Asparagine synthetase [glutamine-hydrolyzing] 1 (632 aa).

The active-site For GATase activity is cysteine 2. The region spanning cysteine 2 to aspartate 214 is the Glutamine amidotransferase type-2 domain. L-glutamine contacts are provided by residues arginine 52–isoleucine 56, asparagine 77–glutamate 79, and aspartate 102. Residues valine 288 and serine 361–glycine 362 each bind ATP.

It belongs to the asparagine synthetase family.

It catalyses the reaction L-aspartate + L-glutamine + ATP + H2O = L-asparagine + L-glutamate + AMP + diphosphate + H(+). Its pathway is amino-acid biosynthesis; L-asparagine biosynthesis; L-asparagine from L-aspartate (L-Gln route): step 1/1. In terms of biological role, main asparagine synthetase in vegetative cells. The polypeptide is Asparagine synthetase [glutamine-hydrolyzing] 1 (asnB) (Bacillus subtilis (strain 168)).